We begin with the raw amino-acid sequence, 620 residues long: Glutathione-regulated potassium-efflux system protein KefC (620 aa).

At Met1–Ser3 the chain is on the periplasmic side. Residues His4 to Val24 traverse the membrane as a helical segment. A topological domain (cytoplasmic) is located at residue Arg25. A helical membrane pass occupies residues Leu26 to Leu46. At Arg47–Glu53 the chain is on the periplasmic side. The chain crosses the membrane as a helical span at residues Ser54–Leu74. Over Asp75 to Gly89 the chain is Cytoplasmic. The chain crosses the membrane as a helical span at residues Gly90–Leu110. Topologically, residues Arg111–Gln113 are periplasmic. A helical transmembrane segment spans residues Val114–Met134. The Cytoplasmic portion of the chain corresponds to Asn135–Ala148. A helical membrane pass occupies residues Phe149–Leu169. The Periplasmic segment spans residues Ala170–Thr177. A helical membrane pass occupies residues Leu178–Leu198. The Cytoplasmic portion of the chain corresponds to Gly199–Ser213. Residues Gly214–Leu233 traverse the membrane as a helical segment. Topologically, residues Leu234–Glu236 are periplasmic. Residues Val237 to Ser254 traverse the membrane as a helical segment. The Cytoplasmic portion of the chain corresponds to Ser255–Lys269. The chain crosses the membrane as a helical span at residues Gly270 to Val290. Residues Glu291–Pro293 are Periplasmic-facing. A helical transmembrane segment spans residues Leu294–Val314. At Ala315–Arg326 the chain is on the cytoplasmic side. The chain crosses the membrane as a helical span at residues Trp327–Gln347. The Periplasmic portion of the chain corresponds to Met348 to Lys358. Residues Ala359–Thr379 traverse the membrane as a helical segment. The Cytoplasmic segment spans residues Arg380–Ile620. An RCK N-terminal domain is found at Gln399–Thr518. Residues Gln599 to Ile620 are disordered. A compositionally biased stretch (basic and acidic residues) spans Glu603 to Ile620.

This sequence belongs to the monovalent cation:proton antiporter 2 (CPA2) transporter (TC 2.A.37) family. KefC subfamily. Homodimer. Interacts with the regulatory subunit KefF.

The protein resides in the cell inner membrane. Its function is as follows. Pore-forming subunit of a potassium efflux system that confers protection against electrophiles. Catalyzes K(+)/H(+) antiport. The protein is Glutathione-regulated potassium-efflux system protein KefC of Salmonella typhi.